Consider the following 336-residue polypeptide: MAEETAPPCGPVSTGGSLSPEKMEKRTCALCPDGHEWSVIYFAPSANIAAHENCLLYSSGLVECGPHDPRNPARSFAVKSVKKEIWRGRRLKCSLCNKGGATVGCDLSSCRKSYHYVCAKKDHAIPQVDEDLGTYKIFCPEHPPQQEETTERADSPSVKKTGKKKSLSSGPPTEPKKMKFSRFKRLMKEEPHGHKDAAVKAPFLKKCLEAGLLTELFEQILEKMDSIHGRFMDETASESDYEGIKTLLFDCGLFGDILRKFQEVIKSKTCEYEERLNQMKQKLEALADLQENLCSFQECGDLDPSGSTSGSLLPPEDHQCRCQESPEVQAGSGDSL.

Positions 1–20 (MAEETAPPCGPVSTGGSLSP) are disordered. Residues 25 to 61 (KRTCALCPDGHEWSVIYFAPSANIAAHENCLLYSSGL) form a C2HC pre-PHD-type zinc finger. The PHD-type zinc-finger motif lies at 91–143 (LKCSLCNKGGATVGCDLSSCRKSYHYVCAKKDHAIPQVDEDLGTYKIFCPEHP). 2 disordered regions span residues 139–179 (CPEH…KKMK) and 303–336 (DPSG…GDSL). The segment covering 303–314 (DPSGSTSGSLLP) has biased composition (low complexity).

In terms of assembly, interacts with BRCA1 and RELA.

The protein localises to the nucleus. Positive regulator of Th1-type cytokine gene expression. This Rattus norvegicus (Rat) protein is PHD finger protein 11 (Phf11).